Reading from the N-terminus, the 598-residue chain is (-)-endo-fenchol synthase, chloroplastic (598 aa).

A chloroplast-targeting transit peptide spans 1–34; sequence MWSTISISMNVAILKKPLNFLHNSNNKASNPRCV. Asp351, Asp355, Asp495, Thr499, and Glu503 together coordinate Mg(2+). A DDXXD motif motif is present at residues 351-355; it reads DDVYD.

Belongs to the terpene synthase family. It depends on Mg(2+) as a cofactor. The cofactor is Mn(2+).

It localises to the plastid. It is found in the chloroplast. It carries out the reaction (2E)-geranyl diphosphate + H2O = (1S,2S,4R)-endo-fenchol + diphosphate. It functions in the pathway secondary metabolite biosynthesis; terpenoid biosynthesis. In terms of biological role, monoterpene synthase that catalyzes the formation of fenchol from geranyl diphosphate. The sequence is that of (-)-endo-fenchol synthase, chloroplastic (FES) from Ocimum basilicum (Sweet basil).